A 576-amino-acid chain; its full sequence is G protein-coupled receptor kinase 6 (576 aa).

An N-terminal region spans residues 1–185; it reads MELENIVANT…LERQPVTKNT (185 aa). The 119-residue stretch at 53 to 171 folds into the RGS domain; it reads YHSLCERQPI…LDSIYFNRFL (119 aa). Residues 186–448 form the Protein kinase domain; the sequence is FRQYRVLGKG…AREVKEHPLF (263 aa). ATP contacts are provided by residues 192–200, lysine 215, and 264–270; these read LGKGGFGEV and TLMNGGD. Residue aspartate 311 is the Proton acceptor of the active site. 315–318 contributes to the ATP binding site; the sequence is ENIL. One can recognise an AGC-kinase C-terminal domain in the interval 449–514; that stretch reads KKLNFKRLGA…GSVSIPWQNE (66 aa). The residue at position 484 (serine 484) is a Phosphoserine; by autocatalysis. Residue threonine 485 is modified to Phosphothreonine; by autocatalysis. Residues cysteine 561, cysteine 562, and cysteine 565 are each lipidated (S-palmitoyl cysteine). Residues serine 566 and serine 568 each carry the phosphoserine modification.

The protein belongs to the protein kinase superfamily. AGC Ser/Thr protein kinase family. GPRK subfamily. Interacts with GIT1. As to expression, widely expressed. Detectable in all brain areas examined.

It is found in the membrane. The catalysed reaction is [G-protein-coupled receptor] + ATP = [G-protein-coupled receptor]-phosphate + ADP + H(+). In terms of biological role, specifically phosphorylates the activated forms of G protein-coupled receptors. Such receptor phosphorylation initiates beta-arrestin-mediated receptor desensitization, internalization, and signaling events leading to their desensitization. Seems to be involved in the desensitization of D2-like dopamine receptors in striatum and chemokine receptor CXCR4 which is critical for CXCL12-induced cell chemotaxis. Phosphorylates rhodopsin (RHO) (in vitro) and a non G-protein-coupled receptor: LRP6 during Wnt signaling (in vitro). The polypeptide is G protein-coupled receptor kinase 6 (Grk6) (Rattus norvegicus (Rat)).